The sequence spans 229 residues: Demethylmenaquinone methyltransferase (229 aa).

S-adenosyl-L-methionine is bound by residues threonine 57, aspartate 77, and 101–102 (DV).

This sequence belongs to the class I-like SAM-binding methyltransferase superfamily. MenG/UbiE family.

The enzyme catalyses a 2-demethylmenaquinol + S-adenosyl-L-methionine = a menaquinol + S-adenosyl-L-homocysteine + H(+). The protein operates within quinol/quinone metabolism; menaquinone biosynthesis; menaquinol from 1,4-dihydroxy-2-naphthoate: step 2/2. In terms of biological role, methyltransferase required for the conversion of demethylmenaquinol (DMKH2) to menaquinol (MKH2). The sequence is that of Demethylmenaquinone methyltransferase from Chlamydia trachomatis serovar A (strain ATCC VR-571B / DSM 19440 / HAR-13).